A 265-amino-acid polypeptide reads, in one-letter code: uncharacterized protein (265 aa).

A divalent metal cation contacts are provided by H7, H9, E94, H130, H155, and D205.

It belongs to the metallo-dependent hydrolases superfamily. TatD-type hydrolase family. A divalent metal cation is required as a cofactor.

This is an uncharacterized protein from Escherichia coli O157:H7.